The primary structure comprises 291 residues: Secreted effector protein PipB (291 aa).

2 Pentapeptide repeat domains span residues leucine 154–glycine 193 and alanine 199–glycine 238.

It localises to the secreted. Its subcellular location is the host membrane. In terms of biological role, effector proteins function to alter host cell physiology and promote bacterial survival in host tissues. Does not appear to be required for the formation or the maintenance of either Salmonella-containing vacuole (SCV) or the Salmonella-induced filaments (Sifs). Not required for intracellular replication in phagocytic cells. This Salmonella typhimurium (strain LT2 / SGSC1412 / ATCC 700720) protein is Secreted effector protein PipB (pipB).